The following is a 269-amino-acid chain: Zinc import ATP-binding protein ZnuC (269 aa).

The 216-residue stretch at 6-221 (VRLTQVGVSF…PAFVELFGQD (216 aa)) folds into the ABC transporter domain. 38–45 (GPNGAGKT) contributes to the ATP binding site.

Belongs to the ABC transporter superfamily. Zinc importer (TC 3.A.1.15.5) family. The complex is composed of two ATP-binding proteins (ZnuC), two transmembrane proteins (ZnuB) and a solute-binding protein (ZnuA).

It is found in the cell inner membrane. It catalyses the reaction Zn(2+)(out) + ATP(in) + H2O(in) = Zn(2+)(in) + ADP(in) + phosphate(in) + H(+)(in). Part of the ABC transporter complex ZnuABC involved in zinc import. Responsible for energy coupling to the transport system. The chain is Zinc import ATP-binding protein ZnuC from Pseudomonas aeruginosa (strain UCBPP-PA14).